A 254-amino-acid polypeptide reads, in one-letter code: Phosphoribosylaminoimidazole-succinocarboxamide synthase (254 aa).

Belongs to the SAICAR synthetase family.

It carries out the reaction 5-amino-1-(5-phospho-D-ribosyl)imidazole-4-carboxylate + L-aspartate + ATP = (2S)-2-[5-amino-1-(5-phospho-beta-D-ribosyl)imidazole-4-carboxamido]succinate + ADP + phosphate + 2 H(+). It participates in purine metabolism; IMP biosynthesis via de novo pathway; 5-amino-1-(5-phospho-D-ribosyl)imidazole-4-carboxamide from 5-amino-1-(5-phospho-D-ribosyl)imidazole-4-carboxylate: step 1/2. The chain is Phosphoribosylaminoimidazole-succinocarboxamide synthase from Sinorhizobium medicae (strain WSM419) (Ensifer medicae).